An 804-amino-acid polypeptide reads, in one-letter code: Probable cadmium-transporting ATPase (804 aa).

HMA domains follow at residues 11–74 and 89–152; these read DKQV…LKVA and DKNV…LKVI. Cd(2+) contacts are provided by cysteine 22, cysteine 25, cysteine 100, and cysteine 103. The next 5 helical transmembrane spans lie at 183–203, 207–227, 248–268, 413–433, and 441–461; these read STLL…FVNG, LVTS…LFKV, IGAA…LFAI, IIMV…GGSW, and LAVL…ISIV. The active-site 4-aspartylphosphate intermediate is aspartate 492. Transmembrane regions (helical) follow at residues 749 to 771 and 776 to 798; these read LNII…LLVI and TLWI…SLRL.

It belongs to the cation transport ATPase (P-type) (TC 3.A.3) family. Type IB subfamily.

It localises to the cell membrane. It catalyses the reaction Cd(2+)(in) + ATP + H2O = Cd(2+)(out) + ADP + phosphate + H(+). Its function is as follows. Couples the hydrolysis of ATP with the export of cadmium. Involved in cadmium resistance. The polypeptide is Probable cadmium-transporting ATPase (cadA) (Staphylococcus aureus).